We begin with the raw amino-acid sequence, 189 residues long: Ras-like protein 1 (189 aa).

10-17 (GAGGVGKS) contacts GTP. The Effector region motif lies at 32–40 (YDPTIEDSY). GTP contacts are provided by residues 57–61 (DTAGQ) and 116–119 (NKCD). A Cysteine methyl ester modification is found at C186. C186 carries S-geranylgeranyl cysteine lipidation. Residues 187 to 189 (KML) constitute a propeptide, removed in mature form.

Belongs to the small GTPase superfamily. Ras family.

It localises to the cell membrane. It catalyses the reaction GTP + H2O = GDP + phosphate + H(+). Alternates between an inactive form bound to GDP and an active form bound to GTP. Activated by a guanine nucleotide-exchange factor (GEF) and inactivated by a GTPase-activating protein (GAP). In terms of biological role, ras proteins bind GDP/GTP and possess intrinsic GTPase activity. Plays a role in eye development by regulating cell growth, survival of postmitotic ommatidial cells and differentiation of photoreceptor cells. During larval development, mediates Ptth/tor signaling leading to the production of ecdysone, a hormone required for the initiation of metamorphosis. This Drosophila ananassae (Fruit fly) protein is Ras-like protein 1.